The following is a 404-amino-acid chain: Sorting nexin-5 (404 aa).

At alanine 2 the chain carries N-acetylalanine. The PX domain maps to 25–172; that stretch reads LNVDPSLQID…HVFLEYDQDL (148 aa). A 1,2-diacyl-sn-glycero-3-phospho-(1D-myo-inositol-4,5-bisphosphate) contacts are provided by residues 40–46, 99–105, and 113–116; these read SERDKVK, FDGPREK, and EGSM. The tract at residues 169-261 is interaction with DOCK1; that stretch reads DQDLSVRRKN…HSLALEEPTV (93 aa). A membrane-binding amphipathic helix region spans residues 183–200; that stretch reads FGGFFKSVVKSADEVLFS. Position 193 is a phosphoserine (serine 193). In terms of domain architecture, BAR spans 202–404; that stretch reads VKEVDDFFEQ…QSCIDLFKNN (203 aa). Lysine 275 is subject to N6-acetyllysine.

It belongs to the sorting nexin family. As to quaternary structure, forms heterodimers with BAR domain-containing sorting nexins SNX1 and SNX2; does not homodimerize. The heterodimers are proposed to self-assemble into helical arrays on the membrane to stabilize and expand local membrane curvature underlying endosomal tubule formation. Thought to be a component of the originally described retromer complex (also called SNX-BAR retromer) which is a pentamer containing the heterotrimeric retromer cargo-selective complex (CSC), also described as vacuolar protein sorting subcomplex (VPS), and a heterodimeric membrane-deforming subcomplex formed between SNX1 or SNX2 and SNX5 or SNX6 (also called SNX-BAR subcomplex); the respective CSC and SNX-BAR subcomplexes associate with low affinity. Interacts with SNX1, SNX2, VPS26A, VPS29, VPS35, DCTN1, DOCK1, MIB1, PIP5K1C. Interacts with HGS; increased by PIP5K1C kinase activity and by PtdIns(3P) and/or PtdIns(3,4)P2.

Its subcellular location is the endosome. It localises to the early endosome. The protein resides in the early endosome membrane. It is found in the cell membrane. The protein localises to the cytoplasmic vesicle membrane. Its subcellular location is the cytoplasm. It localises to the cell projection. The protein resides in the phagocytic cup. It is found in the ruffle. In terms of biological role, involved in several stages of intracellular trafficking. Interacts with membranes containing phosphatidylinositol lipids. Acts in part as component of the retromer membrane-deforming SNX-BAR subcomplex. The SNX-BAR retromer mediates retrograde transport of cargo proteins from endosomes to the trans-Golgi network (TGN) and is involved in endosome-to-plasma membrane transport for cargo protein recycling. The SNX-BAR subcomplex functions to deform the donor membrane into a tubular profile called endosome-to-TGN transport carrier (ETC). Does not have in vitro vesicle-to-membrane remodeling activity. Involved in retrograde transport of lysosomal enzyme receptor IGF2R. May function as link between endosomal transport vesicles and dynactin. Plays a role in the internalization of EGFR after EGF stimulation. Involved in EGFR endosomal sorting and degradation; the function involves PIP5K1C and is retromer-independent. Together with PIP5K1C facilitates HGS interaction with ubiquitinated EGFR, which initiates EGFR sorting to intraluminal vesicles (ILVs) of the multivesicular body for subsequent lysosomal degradation. Involved in E-cadherin sorting and degradation; inhibits PIP5K1C-mediated E-cadherin degradation. Plays a role in macropinocytosis. The protein is Sorting nexin-5 (SNX5) of Bos taurus (Bovine).